A 140-amino-acid polypeptide reads, in one-letter code: Vesicle transport protein GOT1 (140 aa).

A run of 4 helical transmembrane segments spans residues Ile12 to Phe32, Gly35 to Asn55, Ile71 to Leu91, and Phe96 to Leu116.

This sequence belongs to the GOT1 family. Homodimer. No interactions with STL1, STL2, CESA1, CESA3, CESA4, CESA6, CESA7 or CESA8.

The protein localises to the golgi apparatus membrane. In terms of biological role, may be involved in fusion of ER-derived transport vesicles with the Golgi complex. This is Vesicle transport protein GOT1 from Arabidopsis thaliana (Mouse-ear cress).